The following is a 20-amino-acid chain: Outer membrane protein 40Va (20 aa).

The protein belongs to the Gram-negative porin family. Homotrimer.

The protein localises to the cell outer membrane. Functionally, forms pores that allow passive diffusion of small molecules across the outer membrane. The sequence is that of Outer membrane protein 40Va from Vibrio alginolyticus.